A 173-amino-acid chain; its full sequence is 6,7-dimethyl-8-ribityllumazine synthase (173 aa).

5-amino-6-(D-ribitylamino)uracil-binding positions include Tyr-34, 65–67 (ALE), and 94–96 (CVI). A (2S)-2-hydroxy-3-oxobutyl phosphate-binding site is contributed by 99 to 100 (ET). His-102 (proton donor) is an active-site residue. Asn-127 provides a ligand contact to 5-amino-6-(D-ribitylamino)uracil. Position 141 (Arg-141) interacts with (2S)-2-hydroxy-3-oxobutyl phosphate.

It belongs to the DMRL synthase family.

It carries out the reaction (2S)-2-hydroxy-3-oxobutyl phosphate + 5-amino-6-(D-ribitylamino)uracil = 6,7-dimethyl-8-(1-D-ribityl)lumazine + phosphate + 2 H2O + H(+). Its pathway is cofactor biosynthesis; riboflavin biosynthesis; riboflavin from 2-hydroxy-3-oxobutyl phosphate and 5-amino-6-(D-ribitylamino)uracil: step 1/2. In terms of biological role, catalyzes the formation of 6,7-dimethyl-8-ribityllumazine by condensation of 5-amino-6-(D-ribitylamino)uracil with 3,4-dihydroxy-2-butanone 4-phosphate. This is the penultimate step in the biosynthesis of riboflavin. The polypeptide is 6,7-dimethyl-8-ribityllumazine synthase (Methylorubrum extorquens (strain CM4 / NCIMB 13688) (Methylobacterium extorquens)).